Reading from the N-terminus, the 553-residue chain is Rhodopsin kinase GRK7 (553 aa).

Serine 36 is subject to Phosphoserine; by PKA. Residues 56–176 enclose the RGS domain; sequence FNSLCEQQPI…LVSPFYDKFL (121 aa). Positions 191 to 454 constitute a Protein kinase domain; sequence FEEFRVLGKG…SDDPRKHHFF (264 aa). Residues 197–205 and lysine 220 each bind ATP; that span reads LGKGGFGEV. Aspartate 316 functions as the Proton acceptor in the catalytic mechanism. One can recognise an AGC-kinase C-terminal domain in the interval 455–520; it reads KTINFPRLEA…GAVPIAWQEE (66 aa). The residue at position 550 (cysteine 550) is a Cysteine methyl ester. Cysteine 550 carries the S-geranylgeranyl cysteine lipid modification. Positions 551–553 are cleaved as a propeptide — removed in mature form; the sequence is LLL.

This sequence belongs to the protein kinase superfamily. AGC Ser/Thr protein kinase family. GPRK subfamily. In terms of assembly, interacts (when prenylated) with PDE6D; this promotes release from membranes. In terms of processing, autophosphorylated in vitro at Ser-490. Phosphorylation at Ser-36 is regulated by light and activated by cAMP.

The protein localises to the membrane. The enzyme catalyses L-threonyl-[rhodopsin] + ATP = O-phospho-L-threonyl-[rhodopsin] + ADP + H(+). It catalyses the reaction L-seryl-[rhodopsin] + ATP = O-phospho-L-seryl-[rhodopsin] + ADP + H(+). Inhibited by phosphorylation of Ser-36. Retina-specific kinase involved in the shutoff of the photoresponse and adaptation to changing light conditions via cone opsin phosphorylation, including rhodopsin (RHO). This is Rhodopsin kinase GRK7 (GRK7) from Sus scrofa (Pig).